The primary structure comprises 472 residues: MDLLSSLPDEVRCLILSFLTTKESASTSVLSKKWRNLFALVPNLDFDDSEFLHPEEGKRERDGILQSFMDFVDRVLSLQGNSSIRKFSLKCETGVPPARVNRWLCEVLQRDVSDIDLTIDLGYGYYLPEELFVSETLVNLKLKSAFNIDWWPGAEGTSLPMLKSLCVYGVRVFCDDELQELLPCFPVLEELQMSNMQWLDSDETVSSATLTTLHITGIRSENPKSISFDTPNLLSFVYTDFVAEDYPLVNMKNLSLARLALRANDDQIKRVRGPSNDLLEYDVVRHFGNVVKLMNGIQNVQELHLCPDTLELLSVCCESMPVFNNVKKLLIYSDEDRGWQAVPVLLRNCPRLETLIFEGIVHHVTDKCGDACDCIFRKDKGRSLKSCPVKVVEINGFGVTMKEKYLIEHFLDYFSCLKEMKIYINCEEDGVTQQVMKNREVSKLVLDEMEEYNEFYSCNVKLFLCKKKSIPQ.

One can recognise an F-box domain in the interval 1 to 49; it reads MDLLSSLPDEVRCLILSFLTTKESASTSVLSKKWRNLFALVPNLDFDDS.

The sequence is that of F-box protein At3g03040 from Arabidopsis thaliana (Mouse-ear cress).